The primary structure comprises 1479 residues: ESX secretion system protein EccC (1479 aa).

The Cytoplasmic portion of the chain corresponds to M1–G235. The helical transmembrane segment at L236–I256 threads the bilayer. Over Q257–R259 the chain is Extracellular. The chain crosses the membrane as a helical span at residues G260 to Q280. Over Y281–E1479 the chain is Cytoplasmic. The stretch at R291–L321 forms a coiled coil. 2 consecutive FtsK domains span residues N652–K848 and Q984–F1168. ATP is bound at residue G672 to S679. E785 is a catalytic residue. ATP-binding positions include G1004 to T1009, N1036, D1105, I1197, D1206, R1287 to T1291, and I1475. Residues V1267 to S1444 form the FtsK 3 domain.

Whole protein oligomerizes in native gels. Part of the ESX / type VII secretion system (T7SS), which is composed of cytosolic and membrane components. The ESX membrane complex is composed of EccB, EccC and EccD.

It is found in the cell membrane. With respect to regulation, esxB binding to the third FtsK domain causes multimerization; a subsequent unknown step relieves the allosteric inhibition of linker 2 on FtsK domain 1, activating the ATPase activity. Functionally, part of the ESX specialized secretion system, which exports proteins from the cell including EsxA (ESAT-6) and EsxB (CFP-10). Might be the translocase subunit. Probably only the first FtsK domain can hydrolyze ATP. The chain is ESX secretion system protein EccC from Geobacillus thermodenitrificans (strain NG80-2).